Reading from the N-terminus, the 118-residue chain is UPF0102 protein DICTH_1420 (118 aa).

It belongs to the UPF0102 family.

The sequence is that of UPF0102 protein DICTH_1420 from Dictyoglomus thermophilum (strain ATCC 35947 / DSM 3960 / H-6-12).